Reading from the N-terminus, the 432-residue chain is Cytochrome c biogenesis protein CcsB (432 aa).

Transmembrane regions (helical) follow at residues Leu-18–Ile-38, Ser-76–Arg-96, and Val-166–Ala-186.

It belongs to the Ccs1/CcsB family. As to quaternary structure, may interact with CcsA.

It localises to the cellular thylakoid membrane. Required during biogenesis of c-type cytochromes (cytochrome c6 and cytochrome f) at the step of heme attachment. The polypeptide is Cytochrome c biogenesis protein CcsB (Synechococcus sp. (strain CC9605)).